The primary structure comprises 390 residues: Ribonucleoside-diphosphate reductase subunit M2 (390 aa).

The residue at position 20 (Ser-20) is a Phosphoserine. Thr-33 carries the phosphothreonine modification. Residues 49 to 51 (RRI) carry the Cy motif. Fe cation is bound by residues Asp-139, Glu-170, and His-173. Residue Tyr-177 is part of the active site. Positions 233, 267, and 270 each coordinate Fe cation.

The protein belongs to the ribonucleoside diphosphate reductase small chain family. Heterodimer of a large and a small subunit. Interacts (via Cy motif and when phosphorylated at Thr-33) with CCNF; the interaction occurs exclusively in G2 and early M. The cofactor is Fe cation. Phosphorylation on Ser-20 relieves the inhibitory effect on Wnt signaling. Phosphorylated on Thr-33 by CDK1 and CDK2; predominantly in G2 and M phase. Post-translationally, ubiquitinated by the SCF(CCNF) E3 ubiquitin-protein ligase complex; leading to its degradation by the proteasome.

It localises to the cytoplasm. The protein resides in the nucleus. It catalyses the reaction a 2'-deoxyribonucleoside 5'-diphosphate + [thioredoxin]-disulfide + H2O = a ribonucleoside 5'-diphosphate + [thioredoxin]-dithiol. Functionally, provides the precursors necessary for DNA synthesis. Catalyzes the biosynthesis of deoxyribonucleotides from the corresponding ribonucleotides. Inhibits Wnt signaling. This is Ribonucleoside-diphosphate reductase subunit M2 (Rrm2) from Rattus norvegicus (Rat).